The following is a 252-amino-acid chain: Imidazole glycerol phosphate synthase subunit HisF (252 aa).

Active-site residues include aspartate 11 and aspartate 130.

It belongs to the HisA/HisF family. Heterodimer of HisH and HisF.

It is found in the cytoplasm. The catalysed reaction is 5-[(5-phospho-1-deoxy-D-ribulos-1-ylimino)methylamino]-1-(5-phospho-beta-D-ribosyl)imidazole-4-carboxamide + L-glutamine = D-erythro-1-(imidazol-4-yl)glycerol 3-phosphate + 5-amino-1-(5-phospho-beta-D-ribosyl)imidazole-4-carboxamide + L-glutamate + H(+). Its pathway is amino-acid biosynthesis; L-histidine biosynthesis; L-histidine from 5-phospho-alpha-D-ribose 1-diphosphate: step 5/9. IGPS catalyzes the conversion of PRFAR and glutamine to IGP, AICAR and glutamate. The HisF subunit catalyzes the cyclization activity that produces IGP and AICAR from PRFAR using the ammonia provided by the HisH subunit. The chain is Imidazole glycerol phosphate synthase subunit HisF from Bacillus pumilus (strain SAFR-032).